The primary structure comprises 174 residues: uncharacterized protein (174 aa).

It belongs to the archaeal NMN adenylyltransferase family.

This is an uncharacterized protein from Archaeoglobus fulgidus (strain ATCC 49558 / DSM 4304 / JCM 9628 / NBRC 100126 / VC-16).